A 259-amino-acid polypeptide reads, in one-letter code: MVTGHGTGHHGQSPVRVPLSSGAPLVEATFASRPSQFLVEAQMGGRMVRAHLADRGRLTDLLTPGARLLLASREEIGRKTAFQVVAVYQDGDLVSLDTQLPNRLVAAALSLGALPQFARYSRVQREVQLGPHRIDFRLSEGLDTCLLEVKSVTRLVDGIAVFPDAPTERGGRHLELLINAARNGQRAAVVFIIQRSRGCAFAPDVTVDPAFSRSLREARSVGVEIYAYRCPVDPSGITLGQEVPVFASFAAVPFELRQH.

Belongs to the SfsA family.

This is Sugar fermentation stimulation protein homolog from Chloroflexus aurantiacus (strain ATCC 29364 / DSM 637 / Y-400-fl).